The primary structure comprises 468 residues: Midnolin (468 aa).

The Ubiquitin-like domain maps to 31 to 105 (MSLAIHSTTG…LTLVPTVEAG (75 aa)). Disordered regions lie at residues 182–264 (PSIA…RSRK) and 404–447 (LRRK…LGLD). Low complexity predominate over residues 185–201 (ASPVSSPCRPVSSAARV). Over residues 202 to 213 (PPVPTSPSPASP) the composition is skewed to pro residues. Low complexity-rich tracts occupy residues 237–260 (SPTA…SPAP) and 419–431 (SPSR…DSSS).

As to quaternary structure, interacts with GCK; the interaction occurs preferentially at low glucose levels. Interacts with the proteasome.

The protein resides in the nucleus. The protein localises to the nucleolus. Its subcellular location is the cytoplasm. It localises to the cytosol. In terms of biological role, facilitates the ubiquitin-independent proteasomal degradation of stimulus-induced transcription factors such as FOSB, EGR1, NR4A1, and IRF4 to the proteasome for degradation. Promotes also the degradation of other substrates such as CBX4. Plays a role in inhibiting the activity of glucokinase GCK and both glucose-induced and basal insulin secretion. This chain is Midnolin (MIDN), found in Homo sapiens (Human).